Reading from the N-terminus, the 163-residue chain is Small ribosomal subunit protein uS5 (163 aa).

Positions 11-74 (LTDRVVHINR…EQAKKNLIRV (64 aa)) constitute an S5 DRBM domain.

Belongs to the universal ribosomal protein uS5 family. As to quaternary structure, part of the 30S ribosomal subunit. Contacts proteins S4 and S8.

In terms of biological role, with S4 and S12 plays an important role in translational accuracy. Its function is as follows. Located at the back of the 30S subunit body where it stabilizes the conformation of the head with respect to the body. This Syntrophotalea carbinolica (strain DSM 2380 / NBRC 103641 / GraBd1) (Pelobacter carbinolicus) protein is Small ribosomal subunit protein uS5.